A 376-amino-acid chain; its full sequence is Putative glutamate--cysteine ligase 2 (376 aa).

Belongs to the glutamate--cysteine ligase type 2 family. YbdK subfamily.

The enzyme catalyses L-cysteine + L-glutamate + ATP = gamma-L-glutamyl-L-cysteine + ADP + phosphate + H(+). In terms of biological role, ATP-dependent carboxylate-amine ligase which exhibits weak glutamate--cysteine ligase activity. The protein is Putative glutamate--cysteine ligase 2 of Mycobacterium bovis (strain ATCC BAA-935 / AF2122/97).